The following is a 361-amino-acid chain: Serine/threonine-protein kinase SAPK9 (361 aa).

Residues 22–278 form the Protein kinase domain; sequence YELVKEIGSG…MPEIKNHPWF (257 aa). ATP-binding positions include 28–36 and K51; that span reads IGSGNFGVA. The active-site Proton acceptor is D141.

The protein belongs to the protein kinase superfamily. Ser/Thr protein kinase family. In terms of assembly, interacts with BZIP46. May be phosphorylated. As to expression, expressed in leaf sheaths and roots. Expressed in shoots of young seedlings.

Its subcellular location is the cytoplasm. The protein localises to the nucleus. The enzyme catalyses L-seryl-[protein] + ATP = O-phospho-L-seryl-[protein] + ADP + H(+). The catalysed reaction is L-threonyl-[protein] + ATP = O-phospho-L-threonyl-[protein] + ADP + H(+). With respect to regulation, activated by hyperosmotic stress and abscisic acid (ABA). Functionally, may play a role in signal transduction of hyperosmotic response. Can phosphorylate BZIP46 in vitro. In Oryza sativa subsp. japonica (Rice), this protein is Serine/threonine-protein kinase SAPK9 (SAPK9).